We begin with the raw amino-acid sequence, 647 residues long: tRNA 5-methylaminomethyl-2-thiouridine biosynthesis bifunctional protein MnmC (647 aa).

The tract at residues Met1 to Ser227 is tRNA (mnm(5)s(2)U34)-methyltransferase. The interval Val256–Lys647 is FAD-dependent cmnm(5)s(2)U34 oxidoreductase.

This sequence in the N-terminal section; belongs to the methyltransferase superfamily. tRNA (mnm(5)s(2)U34)-methyltransferase family. The protein in the C-terminal section; belongs to the DAO family. FAD serves as cofactor.

It localises to the cytoplasm. The catalysed reaction is 5-aminomethyl-2-thiouridine(34) in tRNA + S-adenosyl-L-methionine = 5-methylaminomethyl-2-thiouridine(34) in tRNA + S-adenosyl-L-homocysteine + H(+). Functionally, catalyzes the last two steps in the biosynthesis of 5-methylaminomethyl-2-thiouridine (mnm(5)s(2)U) at the wobble position (U34) in tRNA. Catalyzes the FAD-dependent demodification of cmnm(5)s(2)U34 to nm(5)s(2)U34, followed by the transfer of a methyl group from S-adenosyl-L-methionine to nm(5)s(2)U34, to form mnm(5)s(2)U34. In Leptospira interrogans serogroup Icterohaemorrhagiae serovar copenhageni (strain Fiocruz L1-130), this protein is tRNA 5-methylaminomethyl-2-thiouridine biosynthesis bifunctional protein MnmC.